We begin with the raw amino-acid sequence, 314 residues long: Olfactory receptor 8U9 (314 aa).

Over 1–25 (MAQINCTQVTEFILVGLTDREELKM) the chain is Extracellular. N5 is a glycosylation site (N-linked (GlcNAc...) asparagine). A helical transmembrane segment spans residues 26-46 (PLFVVFLSIYLFTTLGNLGLI). The Cytoplasmic segment spans residues 47 to 54 (LVIRTDAR). The chain crosses the membrane as a helical span at residues 55-75 (LHTPMYFFLSNLAFVDFCYSS). Residues 76 to 99 (VITPKMLGNFLYKQNMISFNACAA) lie on the Extracellular side of the membrane. Residues C97 and C189 are joined by a disulfide bond. Residues 100 to 120 (QLGCFLAFMTAECLLLASMAY) form a helical membrane-spanning segment. The Cytoplasmic portion of the chain corresponds to 121–133 (DRYVAICNPLLYM). A helical membrane pass occupies residues 134 to 154 (VLMSPGICFQLVAAPYSYSFL). The Extracellular segment spans residues 155–196 (VALFHAILTFRLCYCHSNAINHFYCDDMPLLRLTCSDTHSKQ). The chain crosses the membrane as a helical span at residues 197–217 (LWIFVCAGIMFISSLLIVFIS). Topologically, residues 218–237 (YTFIISAILRMRSAEGRRKA) are cytoplasmic. The chain crosses the membrane as a helical span at residues 238 to 258 (FSTCGSHMLAVTIFYGTLIFM). At 259-271 (YLQPSSNHSLDTD) the chain is on the extracellular side. A glycan (N-linked (GlcNAc...) asparagine) is linked at N265. A helical transmembrane segment spans residues 272-292 (KMASVFYTVIIPMLNPLIYSL). The Cytoplasmic segment spans residues 293–314 (RNKEVKDALKKLIASKNQMLSS).

The protein belongs to the G-protein coupled receptor 1 family.

It localises to the cell membrane. Functionally, potential odorant receptor. The sequence is that of Olfactory receptor 8U9 from Mus musculus (Mouse).